A 287-amino-acid chain; its full sequence is Ribonuclease Z (287 aa).

Histidine 64, histidine 66, aspartate 68, histidine 69, histidine 124, aspartate 191, and histidine 250 together coordinate Zn(2+). Catalysis depends on aspartate 68, which acts as the Proton acceptor.

Belongs to the RNase Z family. Homodimer. It depends on Zn(2+) as a cofactor.

It catalyses the reaction Endonucleolytic cleavage of RNA, removing extra 3' nucleotides from tRNA precursor, generating 3' termini of tRNAs. A 3'-hydroxy group is left at the tRNA terminus and a 5'-phosphoryl group is left at the trailer molecule.. Zinc phosphodiesterase, which displays some tRNA 3'-processing endonuclease activity. Probably involved in tRNA maturation, by removing a 3'-trailer from precursor tRNA. This Pyrobaculum islandicum (strain DSM 4184 / JCM 9189 / GEO3) protein is Ribonuclease Z.